The chain runs to 198 residues: Nucleoid occlusion factor SlmA (198 aa).

Residues 9-70 (RNRREEILQA…SLIEFIEDSL (62 aa)) enclose the HTH tetR-type domain. A DNA-binding region (H-T-H motif) is located at residues 33-52 (TTAKLAANVGVSEAALYRHF). The stretch at 119–144 (DRLQGRINQLFERIEVQLRQVLREKK) forms a coiled coil.

Belongs to the nucleoid occlusion factor SlmA family. Homodimer. Interacts with FtsZ.

Its subcellular location is the cytoplasm. The protein resides in the nucleoid. Its function is as follows. Required for nucleoid occlusion (NO) phenomenon, which prevents Z-ring formation and cell division over the nucleoid. Acts as a DNA-associated cell division inhibitor that binds simultaneously chromosomal DNA and FtsZ, and disrupts the assembly of FtsZ polymers. SlmA-DNA-binding sequences (SBS) are dispersed on non-Ter regions of the chromosome, preventing FtsZ polymerization at these regions. The polypeptide is Nucleoid occlusion factor SlmA (Yersinia enterocolitica serotype O:8 / biotype 1B (strain NCTC 13174 / 8081)).